We begin with the raw amino-acid sequence, 563 residues long: Probable lysosomal cobalamin transporter (563 aa).

A run of 5 helical transmembrane segments spans residues 8-28, 40-60, 95-115, 144-164, and 188-208; these read LIWF…SVFI, FVTF…MLLP, VIYY…IPFA, YTLA…FAPM, and AFTF…VFYT. N228 carries an N-linked (GlcNAc...) asparagine glycan. 4 helical membrane passes run 314–334, 374–394, 416–436, and 506–526; these read GGFS…MTVI, IIFA…VVAV, MLLA…SVVM, and FGAL…VILV. The segment at 537–563 is disordered; sequence ERQLDEDAEEAEEESLLASTGRSGNPT. Over residues 539–551 the composition is skewed to acidic residues; that stretch reads QLDEDAEEAEEES.

This sequence belongs to the LIMR family. LMBRD1 subfamily.

It localises to the lysosome membrane. In terms of biological role, probable lysosomal cobalamin transporter. Required to export cobalamin from lysosomes allowing its conversion to cofactors. This is Probable lysosomal cobalamin transporter from Neosartorya fischeri (strain ATCC 1020 / DSM 3700 / CBS 544.65 / FGSC A1164 / JCM 1740 / NRRL 181 / WB 181) (Aspergillus fischerianus).